The primary structure comprises 1342 residues: DNA-directed RNA polymerase subunit beta (1342 aa).

The protein belongs to the RNA polymerase beta chain family. The RNAP catalytic core consists of 2 alpha, 1 beta, 1 beta' and 1 omega subunit. When a sigma factor is associated with the core the holoenzyme is formed, which can initiate transcription.

It catalyses the reaction RNA(n) + a ribonucleoside 5'-triphosphate = RNA(n+1) + diphosphate. Its function is as follows. DNA-dependent RNA polymerase catalyzes the transcription of DNA into RNA using the four ribonucleoside triphosphates as substrates. This chain is DNA-directed RNA polymerase subunit beta, found in Aeromonas salmonicida (strain A449).